Consider the following 305-residue polypeptide: Probable alpha-L-glutamate ligase (305 aa).

The ATP-grasp domain occupies 119-301 (LQVLAAQHIP…IAGLIIDYLL (183 aa)). Residues K155, 192–193 (DF), D201, and 225–227 (RAN) each bind ATP. Mg(2+) is bound by residues D262, E274, and N276. Residues D262, E274, and N276 each contribute to the Mn(2+) site.

The protein belongs to the RimK family. The cofactor is Mg(2+). Mn(2+) serves as cofactor.

The sequence is that of Probable alpha-L-glutamate ligase from Haemophilus ducreyi (strain 35000HP / ATCC 700724).